The chain runs to 113 residues: UPF0482 protein YnfB (113 aa).

The N-terminal stretch at 1–28 (MKITLSKRIDLLAFLLPCALALSTTVHA) is a signal peptide.

Belongs to the UPF0482 family.

The protein is UPF0482 protein YnfB of Escherichia coli O157:H7.